The sequence spans 323 residues: Tyrosine--tRNA ligase (323 aa).

Y36 contributes to the L-tyrosine binding site. Positions P41–H49 match the 'HIGH' region motif. The L-tyrosine site is built by Y158, Q162, D165, and Q180. A 'KMSKS' region motif is present at residues K214 to S218. Residue S217 participates in ATP binding.

Belongs to the class-I aminoacyl-tRNA synthetase family. TyrS type 3 subfamily. In terms of assembly, homodimer.

The protein resides in the cytoplasm. It catalyses the reaction tRNA(Tyr) + L-tyrosine + ATP = L-tyrosyl-tRNA(Tyr) + AMP + diphosphate + H(+). Its function is as follows. Catalyzes the attachment of tyrosine to tRNA(Tyr) in a two-step reaction: tyrosine is first activated by ATP to form Tyr-AMP and then transferred to the acceptor end of tRNA(Tyr). This chain is Tyrosine--tRNA ligase, found in Archaeoglobus fulgidus (strain ATCC 49558 / DSM 4304 / JCM 9628 / NBRC 100126 / VC-16).